Here is a 226-residue protein sequence, read N- to C-terminus: Protein YAE1 homolog (226 aa).

The tract at residues 45–85 (GYRDGIDAGKAVTLQQGFNQGYKKGAEVILNYGRLRGTLSA) is deca-GX3 motif; required for interaction with LTO1.

As to quaternary structure, forms a complex with LTO1.

It localises to the cytoplasm. It is found in the nucleus. The complex LTO1:YAE1 functions as a target specific adapter that probably recruits apo-ABCE1 to the cytosolic iron-sulfur protein assembly (CIA) complex machinery. May be required for biogenesis of the large ribosomal subunit and initiation of translation. The sequence is that of Protein YAE1 homolog from Homo sapiens (Human).